The primary structure comprises 235 residues: Isopentenyl-diphosphate Delta-isomerase I (235 aa).

Residue lysine 38 coordinates substrate. Residues histidine 42 and histidine 54 each coordinate Mg(2+). The Nudix hydrolase domain occupies leucine 52–leucine 204. Substrate is bound by residues arginine 73 and lysine 77. The active site involves cysteine 89. A substrate-binding site is contributed by serine 90. The Mg(2+) site is built by glutamate 149 and glutamate 151. Glutamate 151 is an active-site residue.

This sequence belongs to the IPP isomerase type 1 family. Mg(2+) serves as cofactor.

It carries out the reaction isopentenyl diphosphate = dimethylallyl diphosphate. Its pathway is isoprenoid biosynthesis; dimethylallyl diphosphate biosynthesis; dimethylallyl diphosphate from isopentenyl diphosphate: step 1/1. The protein operates within porphyrin-containing compound metabolism; chlorophyll biosynthesis. Functionally, catalyzes the 1,3-allylic rearrangement of the homoallylic substrate isopentenyl (IPP) to its highly electrophilic allylic isomer, dimethylallyl diphosphate (DMAPP). This chain is Isopentenyl-diphosphate Delta-isomerase I (IPI1), found in Camptotheca acuminata (Happy tree).